The following is a 189-amino-acid chain: Elongation factor P (189 aa).

This sequence belongs to the elongation factor P family.

The protein resides in the cytoplasm. Its pathway is protein biosynthesis; polypeptide chain elongation. In terms of biological role, involved in peptide bond synthesis. Stimulates efficient translation and peptide-bond synthesis on native or reconstituted 70S ribosomes in vitro. Probably functions indirectly by altering the affinity of the ribosome for aminoacyl-tRNA, thus increasing their reactivity as acceptors for peptidyl transferase. This Rhizobium radiobacter (Agrobacterium tumefaciens) protein is Elongation factor P.